Here is a 114-residue protein sequence, read N- to C-terminus: Ig heavy chain V region (114 aa).

In terms of domain architecture, Ig-like spans 1–106 (EVQLQQSGAE…AVRVISRYFD (106 aa)).

This Mus musculus (Mouse) protein is Ig heavy chain V region.